A 71-amino-acid polypeptide reads, in one-letter code: UPF0352 protein Asuc_0778 (71 aa).

Belongs to the UPF0352 family.

The polypeptide is UPF0352 protein Asuc_0778 (Actinobacillus succinogenes (strain ATCC 55618 / DSM 22257 / CCUG 43843 / 130Z)).